Reading from the N-terminus, the 365-residue chain is Ribosomal RNA large subunit methyltransferase F (365 aa).

2 stretches are compositionally biased toward low complexity: residues 1–18 and 30–42; these read MPKPAIKTAAKPATSPAG and AKLKASTAKAASK. Positions 1-50 are disordered; the sequence is MPKPAIKTAAKPATSPAGKRAKPNTPQSVAKLKASTAKAASKPKAKLGEK.

Belongs to the methyltransferase superfamily. METTL16/RlmF family.

Its subcellular location is the cytoplasm. It carries out the reaction adenosine(1618) in 23S rRNA + S-adenosyl-L-methionine = N(6)-methyladenosine(1618) in 23S rRNA + S-adenosyl-L-homocysteine + H(+). In terms of biological role, specifically methylates the adenine in position 1618 of 23S rRNA. The protein is Ribosomal RNA large subunit methyltransferase F of Shewanella oneidensis (strain ATCC 700550 / JCM 31522 / CIP 106686 / LMG 19005 / NCIMB 14063 / MR-1).